A 101-amino-acid chain; its full sequence is Small ribosomal subunit protein uS14A (101 aa).

Positions 31 to 73 are disordered; the sequence is IKSPSTTPEARVAAQSELNRQPRDASPVRVRNRDSVDGRPRGH. The span at 61–70 shows a compositional bias: basic and acidic residues; the sequence is RNRDSVDGRP.

It belongs to the universal ribosomal protein uS14 family. As to quaternary structure, part of the 30S ribosomal subunit. Contacts proteins S3 and S10.

In terms of biological role, binds 16S rRNA, required for the assembly of 30S particles and may also be responsible for determining the conformation of the 16S rRNA at the A site. The polypeptide is Small ribosomal subunit protein uS14A (Mycolicibacterium vanbaalenii (strain DSM 7251 / JCM 13017 / BCRC 16820 / KCTC 9966 / NRRL B-24157 / PYR-1) (Mycobacterium vanbaalenii)).